The chain runs to 101 residues: NAD(P)H-quinone oxidoreductase subunit 4L, chloroplastic (101 aa).

Helical transmembrane passes span 2–22, 32–52, and 61–81; these read ILEHVLVLSAYLFSIGIYGLI, MCLELILNAVNINFVTFSDFF, and IFSIFVIAIAAAEAAIGLAIV.

This sequence belongs to the complex I subunit 4L family. NDH is composed of at least 16 different subunits, 5 of which are encoded in the nucleus.

The protein resides in the plastid. Its subcellular location is the chloroplast thylakoid membrane. It carries out the reaction a plastoquinone + NADH + (n+1) H(+)(in) = a plastoquinol + NAD(+) + n H(+)(out). The catalysed reaction is a plastoquinone + NADPH + (n+1) H(+)(in) = a plastoquinol + NADP(+) + n H(+)(out). Functionally, NDH shuttles electrons from NAD(P)H:plastoquinone, via FMN and iron-sulfur (Fe-S) centers, to quinones in the photosynthetic chain and possibly in a chloroplast respiratory chain. The immediate electron acceptor for the enzyme in this species is believed to be plastoquinone. Couples the redox reaction to proton translocation, and thus conserves the redox energy in a proton gradient. The protein is NAD(P)H-quinone oxidoreductase subunit 4L, chloroplastic of Nicotiana sylvestris (Wood tobacco).